Here is a 194-residue protein sequence, read N- to C-terminus: Probable transcription factor At4g00130 (194 aa).

The protein belongs to the GeBP family.

This is Probable transcription factor At4g00130 from Arabidopsis thaliana (Mouse-ear cress).